Here is a 355-residue protein sequence, read N- to C-terminus: S-adenosylmethionine:tRNA ribosyltransferase-isomerase (355 aa).

This sequence belongs to the QueA family. Monomer.

Its subcellular location is the cytoplasm. The catalysed reaction is 7-aminomethyl-7-carbaguanosine(34) in tRNA + S-adenosyl-L-methionine = epoxyqueuosine(34) in tRNA + adenine + L-methionine + 2 H(+). It participates in tRNA modification; tRNA-queuosine biosynthesis. Transfers and isomerizes the ribose moiety from AdoMet to the 7-aminomethyl group of 7-deazaguanine (preQ1-tRNA) to give epoxyqueuosine (oQ-tRNA). The polypeptide is S-adenosylmethionine:tRNA ribosyltransferase-isomerase (Erwinia tasmaniensis (strain DSM 17950 / CFBP 7177 / CIP 109463 / NCPPB 4357 / Et1/99)).